The primary structure comprises 152 residues: Flagellar assembly factor FliW (152 aa).

The protein belongs to the FliW family. Interacts with translational regulator CsrA and flagellin(s).

Its subcellular location is the cytoplasm. Functionally, acts as an anti-CsrA protein, binds CsrA and prevents it from repressing translation of its target genes, one of which is flagellin. Binds to flagellin and participates in the assembly of the flagellum. The sequence is that of Flagellar assembly factor FliW from Desulfitobacterium hafniense (strain Y51).